Here is a 1218-residue protein sequence, read N- to C-terminus: ATP-dependent helicase/deoxyribonuclease subunit B (1218 aa).

A UvrD-like helicase ATP-binding domain is found at 1–279 (MRFIVGRAGT…VFLTETHRFE (279 aa)). 6–13 (GRAGTGKS) provides a ligand contact to ATP. A UvrD-like helicase C-terminal domain is found at 281–588 (AGLKHLERFY…LVGSLDRSRN (308 aa)). Cys-786 is a [4Fe-4S] cluster binding site. The tract at residues 987–1006 (LAEGSKGSEGSEGSEDSEDS) is disordered. The [4Fe-4S] cluster site is built by Cys-1126, Cys-1129, and Cys-1135. Residues 1160–1169 (RVQSQDSEQY) are compositionally biased toward polar residues. The segment at 1160 to 1218 (RVQSQDSEQYPEQHPPTSVPGETSRRALQKDGGNSPRGQELIWLGEDEAGAGKEDDGHE) is disordered. Basic and acidic residues predominate over residues 1209-1218 (GAGKEDDGHE).

It belongs to the helicase family. AddB/RexB type 1 subfamily. As to quaternary structure, heterodimer of AddA and AddB. The cofactor is Mg(2+). It depends on [4Fe-4S] cluster as a cofactor.

Functionally, the heterodimer acts as both an ATP-dependent DNA helicase and an ATP-dependent, dual-direction single-stranded exonuclease. Recognizes the chi site generating a DNA molecule suitable for the initiation of homologous recombination. The AddB subunit has 5' -&gt; 3' nuclease activity but not helicase activity. The protein is ATP-dependent helicase/deoxyribonuclease subunit B of Desulfitobacterium hafniense (strain DSM 10664 / DCB-2).